A 206-amino-acid chain; its full sequence is Small ribosomal subunit protein uS4 (206 aa).

Residues 96-156 enclose the S4 RNA-binding domain; sequence TRLDNVVYRM…EKSRTQARIK (61 aa).

It belongs to the universal ribosomal protein uS4 family. Part of the 30S ribosomal subunit. Contacts protein S5. The interaction surface between S4 and S5 is involved in control of translational fidelity.

Functionally, one of the primary rRNA binding proteins, it binds directly to 16S rRNA where it nucleates assembly of the body of the 30S subunit. Its function is as follows. With S5 and S12 plays an important role in translational accuracy. This chain is Small ribosomal subunit protein uS4, found in Shewanella putrefaciens (strain CN-32 / ATCC BAA-453).